The chain runs to 660 residues: Leucine-rich repeat transmembrane protein FLRT2 (660 aa).

Positions 1–35 (MGLQTAKWPSHGTFVLKFWLIMSLGLYSHVSKLLA) are cleaved as a signal peptide. Intrachain disulfides connect C36–C42 and C40–C49. The 32-residue stretch at 36–67 (CPSVCRCDRNFVYCNERSLTSVPLGIPEGVTV) folds into the LRRNT domain. Topologically, residues 36 to 540 (CPSVCRCDRN…QTTSHTMGSP (505 aa)) are extracellular. LRR repeat units follow at residues 62 to 87 (PEGV…LHNV), 88 to 108 (QSVH…MNLP), 109 to 131 (KNVR…ALAQ), 132 to 157 (LLKL…AFRE), 159 to 181 (ISLK…LPVD), 183 to 202 (QELR…AFQN), 203 to 228 (LTSL…TFSH), 229 to 251 (LTKL…DLPG), 252 to 274 (THLI…AFAN), and 275 to 298 (LRKL…VFDH). Residue N202 is glycosylated (N-linked (GlcNAc...) asparagine). Intrachain disulfides connect C314–C339 and C316–C360. The region spanning 338-361 (MCQGPEQVRGMAVRELNMNLLSCP) is the LRRCT domain. Positions 372–396 (PAPSTVSPTTQSPTVSVPSPSRGSV) are enriched in low complexity. A disordered region spans residues 372 to 413 (PAPSTVSPTTQSPTVSVPSPSRGSVPPAPAPSKLPTIPDWDG). The 99-residue stretch at 419 to 517 (PPISERIQLS…ICSEATTHAS (99 aa)) folds into the Fibronectin type-III domain. A helical transmembrane segment spans residues 541–561 (FLLAGLIGGAVIFVLVVLLSV). At 562–660 (FCWHMHKKGR…SVPDLEHCHT (99 aa)) the chain is on the cytoplasmic side.

Self-associates (via leucine-rich repeats), giving rise to homooligomers. Interacts with FGFR1. Interacts with FGFR2. Interacts (via extracellular domain) with ADGRL1/LPHN1. Interacts (via extracellular domain) with ADGRL3 (via olfactomedin-like domain). Interacts (via extracellular domain) with UNC5D (via the first Ig-like domain). Can also interact (via extracellular domain) with UNC5B, but with much lower affinity. Interacts (via extracellular domain) with FN1. In terms of processing, N-glycosylated. Post-translationally, proteolytic cleavage in the juxtamembrane region gives rise to a soluble ectodomain. Cleavage is probably effected by a metalloprotease. As to expression, detected in brain (at protein level).

The protein localises to the cell membrane. The protein resides in the endoplasmic reticulum membrane. It is found in the synapse. It localises to the synaptosome. Its subcellular location is the cell junction. The protein localises to the focal adhesion. The protein resides in the secreted. It is found in the extracellular space. It localises to the extracellular matrix. Its subcellular location is the microsome membrane. Functions in cell-cell adhesion, cell migration and axon guidance. Mediates cell-cell adhesion via its interactions with ADGRL3 and probably also other latrophilins that are expressed at the surface of adjacent cells. May play a role in the migration of cortical neurons during brain development via its interaction with UNC5D. Mediates axon growth cone collapse and plays a repulsive role in neuron guidance via its interaction with UNC5D, and possibly also other UNC-5 family members. Plays a role in fibroblast growth factor-mediated signaling cascades. Required for normal organization of the cardiac basement membrane during embryogenesis, and for normal embryonic epicardium and heart morphogenesis. The sequence is that of Leucine-rich repeat transmembrane protein FLRT2 from Rattus norvegicus (Rat).